The sequence spans 244 residues: MRSVRMRAELDGMHVSGAERVIPHYELEKVVMELLKRPKRYDKIVITIERVENLETIPKSLPIKSHDFADVEQAHEFVIKKLKEIGIEESITQKALKLLTEGPNPKGGNMRGAVLMDPVSGERLEPDQERGIRTTRIDWRNRTAIKEALRERGIKKFYLERLIDALAIATKNIHCGVIAEICWSDDPEYTTGYIASKEFGYIRIKPMKEEHTPTGGRVYFVKRESLQELIECLERKVMLIEQLL.

Belongs to the BioW family. Homodimer. It depends on Mg(2+) as a cofactor.

The catalysed reaction is heptanedioate + ATP + CoA = 6-carboxyhexanoyl-CoA + AMP + diphosphate. It participates in metabolic intermediate metabolism; pimeloyl-CoA biosynthesis; pimeloyl-CoA from pimelate: step 1/1. Functionally, catalyzes the transformation of pimelate into pimeloyl-CoA with concomitant hydrolysis of ATP to AMP. This chain is 6-carboxyhexanoate--CoA ligase, found in Hydrogenobacter thermophilus (strain DSM 6534 / IAM 12695 / TK-6).